Here is a 257-residue protein sequence, read N- to C-terminus: Aspartate/glutamate leucyltransferase (257 aa).

It belongs to the R-transferase family. Bpt subfamily.

The protein localises to the cytoplasm. The catalysed reaction is N-terminal L-glutamyl-[protein] + L-leucyl-tRNA(Leu) = N-terminal L-leucyl-L-glutamyl-[protein] + tRNA(Leu) + H(+). It carries out the reaction N-terminal L-aspartyl-[protein] + L-leucyl-tRNA(Leu) = N-terminal L-leucyl-L-aspartyl-[protein] + tRNA(Leu) + H(+). Functions in the N-end rule pathway of protein degradation where it conjugates Leu from its aminoacyl-tRNA to the N-termini of proteins containing an N-terminal aspartate or glutamate. This Phenylobacterium zucineum (strain HLK1) protein is Aspartate/glutamate leucyltransferase.